Reading from the N-terminus, the 279-residue chain is Urease accessory protein UreD (279 aa).

Belongs to the UreD family. UreD, UreF and UreG form a complex that acts as a GTP-hydrolysis-dependent molecular chaperone, activating the urease apoprotein by helping to assemble the nickel containing metallocenter of UreC. The UreE protein probably delivers the nickel.

It is found in the cytoplasm. In terms of biological role, required for maturation of urease via the functional incorporation of the urease nickel metallocenter. The protein is Urease accessory protein UreD of Trichodesmium erythraeum (strain IMS101).